Here is a 467-residue protein sequence, read N- to C-terminus: tRNA-2-methylthio-N(6)-dimethylallyladenosine synthase (467 aa).

The MTTase N-terminal domain maps to 2–118 (PSVFIKTFGC…VAEIADNLLK (117 aa)). Residues cysteine 11, cysteine 47, cysteine 81, cysteine 159, cysteine 163, and cysteine 166 each contribute to the [4Fe-4S] cluster site. The Radical SAM core domain occupies 145–379 (TKAQPIAYVS…LEIQNKITME (235 aa)). The TRAM domain occupies 382 to 445 (QKWVGQVVEI…GHTFYGTPLI (64 aa)).

This sequence belongs to the methylthiotransferase family. MiaB subfamily. In terms of assembly, monomer. [4Fe-4S] cluster serves as cofactor.

It localises to the cytoplasm. The catalysed reaction is N(6)-dimethylallyladenosine(37) in tRNA + (sulfur carrier)-SH + AH2 + 2 S-adenosyl-L-methionine = 2-methylsulfanyl-N(6)-dimethylallyladenosine(37) in tRNA + (sulfur carrier)-H + 5'-deoxyadenosine + L-methionine + A + S-adenosyl-L-homocysteine + 2 H(+). In terms of biological role, catalyzes the methylthiolation of N6-(dimethylallyl)adenosine (i(6)A), leading to the formation of 2-methylthio-N6-(dimethylallyl)adenosine (ms(2)i(6)A) at position 37 in tRNAs that read codons beginning with uridine. This chain is tRNA-2-methylthio-N(6)-dimethylallyladenosine synthase, found in Methylacidiphilum infernorum (isolate V4) (Methylokorus infernorum (strain V4)).